We begin with the raw amino-acid sequence, 461 residues long: Tubulin gamma chain (461 aa).

Residue 142–148 (AGGTGSG) coordinates GTP.

The protein belongs to the tubulin family.

Its subcellular location is the cytoplasm. It localises to the cytoskeleton. The protein localises to the microtubule organizing center. The protein resides in the spindle pole body. Functionally, tubulin is the major constituent of microtubules. The gamma chain is found at microtubule organizing centers (MTOC) such as the spindle poles or the centrosome, suggesting that it is involved in the minus-end nucleation of microtubule assembly. This chain is Tubulin gamma chain (tbg), found in Neurospora crassa (strain ATCC 24698 / 74-OR23-1A / CBS 708.71 / DSM 1257 / FGSC 987).